A 101-amino-acid polypeptide reads, in one-letter code: Small ribosomal subunit protein uS10 (101 aa).

Belongs to the universal ribosomal protein uS10 family. In terms of assembly, part of the 30S ribosomal subunit.

In terms of biological role, involved in the binding of tRNA to the ribosomes. The protein is Small ribosomal subunit protein uS10 of Saccharopolyspora erythraea (strain ATCC 11635 / DSM 40517 / JCM 4748 / NBRC 13426 / NCIMB 8594 / NRRL 2338).